The chain runs to 535 residues: Reticuline oxidase (535 aa).

The N-terminal stretch at 1–23 (MMCRSLTLRFFLFIVLLQTCVRG) is a signal peptide. Asn42 carries N-linked (GlcNAc...) asparagine glycosylation. Positions 71-245 (TVSKPSFIVM…YAWKIKLLPV (175 aa)) constitute an FAD-binding PCMH-type domain. Residues 108-170 (HSYEGLSYTA…DTLGFTAGWC (63 aa)) constitute a cross-link (6-(S-cysteinyl)-8alpha-(pros-histidyl)-FAD (His-Cys)). Asn475 carries N-linked (GlcNAc...) asparagine glycosylation.

It belongs to the oxygen-dependent FAD-linked oxidoreductase family. It depends on FAD as a cofactor. A metal cation is required as a cofactor. The FAD cofactor is bound via a bicovalent 6-S-cysteinyl, 8alpha-N1-histidyl FAD linkage. Expressed in roots and stems. Not detected in leaves or reproductive organs. Restricted to the parietal region of sieve elements adjacent or proximal to laticifers.

It localises to the cytoplasmic vesicle. The catalysed reaction is (S)-reticuline + O2 = (S)-scoulerine + H2O2 + H(+). The protein operates within alkaloid biosynthesis; (S)-scoulerine biosynthesis; (S)-scoulerine from (S)-reticuline: step 1/1. Functionally, oxygen-dependent FAD-dependent oxidoreductase essential to the formation of benzophenanthridine alkaloids in the response of plants to pathogenic attack. Catalyzes the stereospecific conversion of the N-methyl moiety of (S)-reticuline into the berberine bridge carbon of (S)-scoulerine. Involved in the biosynthesis of sanguinarine. The sequence is that of Reticuline oxidase (BBE1) from Papaver somniferum (Opium poppy).